A 496-amino-acid chain; its full sequence is Transcription termination/antitermination protein NusA (496 aa).

In terms of domain architecture, S1 motif spans 135-200; sequence GQIITGIVKK…RGAQLFISRS (66 aa). In terms of domain architecture, KH spans 302-370; the sequence is CHTMDIAVDI…KNLNINENII (69 aa). 2 repeat units span residues 364 to 414 and 440 to 490. The 2 X 51 AA approximate repeats stretch occupies residues 364-490; sequence NINENIIKIL…LLIMTARNIC (127 aa).

It belongs to the NusA family. Monomer. Binds directly to the core enzyme of the DNA-dependent RNA polymerase and to nascent RNA.

The protein localises to the cytoplasm. Functionally, participates in both transcription termination and antitermination. The chain is Transcription termination/antitermination protein NusA from Buchnera aphidicola subsp. Acyrthosiphon pisum (strain APS) (Acyrthosiphon pisum symbiotic bacterium).